We begin with the raw amino-acid sequence, 555 residues long: Synaptotagmin-14 (555 aa).

The Extracellular segment spans residues 1–24; it reads MAIEGGERTCGVHELICIRKVSPE. Residues 25–47 traverse the membrane as a helical; Signal-anchor for type III membrane protein segment; it reads AVGFLSAVGVFIILMLLLFLYIN. Topologically, residues 48–555 are cytoplasmic; sequence KKFCFENVGG…VCRWHALLES (508 aa). 2 disordered regions span residues 157 to 179 and 222 to 257; these read TPPLDELQPPPYQDDSGSPHLSC and GYEEDVPSDSTAVLSPEDMSAQGSSSQLPKPFDPEP. C2 domains follow at residues 260–379 and 415–550; these read KYGT…SLPV and SVPE…CRWH.

Belongs to the synaptotagmin family. As to quaternary structure, homodimer. Can also form heterodimers. In terms of tissue distribution, highly expressed in fetal and adult brain tissue.

The protein resides in the membrane. In terms of biological role, may be involved in the trafficking and exocytosis of secretory vesicles in non-neuronal tissues. Is Ca(2+)-independent. The protein is Synaptotagmin-14 (SYT14) of Homo sapiens (Human).